Reading from the N-terminus, the 474-residue chain is 3-isopropylmalate dehydratase large subunit (474 aa).

[4Fe-4S] cluster contacts are provided by C353, C414, and C417.

The protein belongs to the aconitase/IPM isomerase family. LeuC type 1 subfamily. In terms of assembly, heterodimer of LeuC and LeuD. Requires [4Fe-4S] cluster as cofactor.

The enzyme catalyses (2R,3S)-3-isopropylmalate = (2S)-2-isopropylmalate. The protein operates within amino-acid biosynthesis; L-leucine biosynthesis; L-leucine from 3-methyl-2-oxobutanoate: step 2/4. Catalyzes the isomerization between 2-isopropylmalate and 3-isopropylmalate, via the formation of 2-isopropylmaleate. The sequence is that of 3-isopropylmalate dehydratase large subunit from Pseudomonas paraeruginosa (strain DSM 24068 / PA7) (Pseudomonas aeruginosa (strain PA7)).